The sequence spans 132 residues: Phosphoribosyl-AMP cyclohydrolase (132 aa).

Residue Asp79 coordinates Mg(2+). Cys80 serves as a coordination point for Zn(2+). Asp81 and Asp83 together coordinate Mg(2+). Zn(2+) is bound by residues Cys100 and Cys107.

This sequence belongs to the PRA-CH family. In terms of assembly, homodimer. Mg(2+) is required as a cofactor. Requires Zn(2+) as cofactor.

The protein localises to the cytoplasm. The enzyme catalyses 1-(5-phospho-beta-D-ribosyl)-5'-AMP + H2O = 1-(5-phospho-beta-D-ribosyl)-5-[(5-phospho-beta-D-ribosylamino)methylideneamino]imidazole-4-carboxamide. The protein operates within amino-acid biosynthesis; L-histidine biosynthesis; L-histidine from 5-phospho-alpha-D-ribose 1-diphosphate: step 3/9. Functionally, catalyzes the hydrolysis of the adenine ring of phosphoribosyl-AMP. The chain is Phosphoribosyl-AMP cyclohydrolase from Delftia acidovorans (strain DSM 14801 / SPH-1).